Reading from the N-terminus, the 467-residue chain is Transcriptional regulator of yeast form adherence 6 (467 aa).

Residues 43–52 show a composition bias toward polar residues; that stretch reads NTSDAGSIPT. 5 disordered regions span residues 43–83, 128–149, 245–275, 312–365, and 390–439; these read NTSD…NIDS, GSSG…NSNN, ESPE…SNSS, NNQL…SGSK, and STLN…DNDR. Positions 92–173 constitute a bHLH domain; sequence ETKQLHSIIE…KSSVEYILYL (82 aa). 2 stretches are compositionally biased toward low complexity: residues 257-275 and 312-322; these read VSET…SNSS and NNQLNNRKNSN. Over residues 323–338 the composition is skewed to polar residues; it reads PISPQTVCIKSQNPSP. The span at 345 to 365 shows a compositional bias: low complexity; that stretch reads SSLSTSIVNSPSSSSSLSGSK. Over residues 417–432 the composition is skewed to polar residues; the sequence is GSANTETVNSGSASSD.

It is found in the nucleus. In terms of biological role, transcription factor required for yeast cell adherence to silicone substrate. The protein is Transcriptional regulator of yeast form adherence 6 (TRY6) of Candida albicans (strain SC5314 / ATCC MYA-2876) (Yeast).